A 553-amino-acid polypeptide reads, in one-letter code: Transmembrane protein DDB_G0292058 (553 aa).

A signal peptide spans 1 to 26; it reads MIKINKILSLLIILLIINCNYQFVKA. The next 2 helical transmembrane spans lie at 80–100 and 137–157; these read ILLS…GIIF and VFIL…VFIT. Asn162, Asn171, Asn178, and Asn195 each carry an N-linked (GlcNAc...) asparagine glycan. Helical transmembrane passes span 243–263 and 274–294; these read IIIV…VSAL and SIAL…HYPI. N-linked (GlcNAc...) asparagine glycosylation is found at Asn315, Asn332, Asn351, Asn396, Asn405, and Asn462. A helical transmembrane segment spans residues 515 to 535; it reads LLIAPTAVFAILLTGLGITGI.

It localises to the membrane. In Dictyostelium discoideum (Social amoeba), this protein is Transmembrane protein DDB_G0292058.